The primary structure comprises 764 residues: MPAKIHISADGQFCDKDGNEIQLRGVNLDPSVKIPAKPFLSTHAPIENDTFFEDADKVSFINHPLVLDDIEQHIIRLKSLGYNTIRLPFTWESLEHAGPGQYDFDYMDYIVEVLTRINSVQQGMYIYLDPHQDVWSRFSGGSGAPLWTLYCAGFQPANFLATDAAILHNYYIDPKTGREVGKDEESYPKMVWPTNYFKLACQTMFTLFFGGKQYAPKCTINGENIQDYLQGRFNDAIMTLCARIKEKAPELFESNCIIGLESMNEPNCGYIGETNLDVIPKERNLKLGKTPTAFQSFMLGEGIECTIDQYKRTFFGFSKGKPCTINPKGKKAWLSAEERDAIDAKYNWERNPEWKPDTCIWKLHGVWEIQNGKRPVLLKPNYFSQPDATVFINNHFVDYYTGIYNKFREFDQELFIIIQPPVMKPPPNLQNSKILDNRTICACHFYDGMTLMYKTWNKRIGIDTYGLVNKKYSNPAFAVVLGENNIRKCIRKQLSEMQKDAKSMLGKKVPVFFTEIGIPFDMDDKKAYITNDYSSQTAALDALGFALEGSNLSYTLWCYCSINSHIWGDNWNNEDFSIWSPDDKPLYHDTRAKTPTPEPSPASTVASVSTSTSKSGSSQPPSFIKPDNHLDLDSPSCTLKSDLSGFRALDAIMRPFPIQIHGRFEFAEFNLCNKSYLLKLVGKTTPEQITVPTYIFIPRHHFTPSRLSIRSSSGHYTYNTDYQVLEWFHEPGHQFIEICAKSKSRPNTPGSDTSNDLPAECVIS.

The Nucleophile role is filled by E515. Positions 588–629 (HDTRAKTPTPEPSPASTVASVSTSTSKSGSSQPPSFIKPDNH) are disordered. The residue at position 594 (T594) is a Phosphothreonine. Over residues 601–622 (PASTVASVSTSTSKSGSSQPPS) the composition is skewed to low complexity.

Belongs to the glycosyl hydrolase 5 (cellulase A) family.

It localises to the cytoplasm. The protein localises to the cytosol. It is found in the vacuole membrane. It carries out the reaction ergosteryl 3-beta-D-glucoside + H2O = ergosterol + D-glucose. Ergosteryl beta-glucosidase involved in the ergosteryl beta-glucoside (EG) catabolic pathway and vacuole formation via hydrolysis of EG to generate glucose. Is also able to hydrolyze cholesteryl beta-glucoside and sitosteryl beta-glucoside to generate glucose; and C6-7-nitro-2,1,3-benzoxadiazole (NBD)-GlcCer to generate C6-NBD-ceramide (Cer). This is Ergosteryl-beta-glucosidase from Saccharomyces cerevisiae (strain ATCC 204508 / S288c) (Baker's yeast).